We begin with the raw amino-acid sequence, 48 residues long: Protein TUNAR (48 aa).

The interval 1-20 (MVITSGNDEDRGGQEKESKE) is disordered. The span at 8 to 20 (DEDRGGQEKESKE) shows a compositional bias: basic and acidic residues. The helical transmembrane segment at 24–44 (LAMLGIIGTILNLIVIIFVYI) threads the bilayer.

As to quaternary structure, interacts with ATPase ATP2A2/SERCA2. Interacts with ATPase ATP2A3/SERCA3; the interaction occurs at low levels in low glucose conditions and is increased by high glucose levels. As to expression, in the adult, expressed in Purkinje cells in the cerebellum, in motor neurons and interneurons in the spinal cord and in neurons of the cortex, hippocampus and thalamus (at protein level). Also detected in the developing cortex, hippocampus and thalamus at embryonic day E15.5 (at protein level).

The protein resides in the endoplasmic reticulum membrane. It localises to the extracellular vesicle membrane. In neurons, plays a role in the regulation of intracellular Ca(2+), possibly by acting as an activator of ATP2A2/SERCA2, thus increasing the efficiency with which Ca(2+) is removed from the cytoplasm. Inhibits differentiation of embryonic stem cells into neurons and inhibits neurite outgrowth, likely as a result of its role in intracellular Ca(2+) regulation. In pancreatic beta cells, lowers Ca(2+) levels in the endoplasmic reticulum and enhances glucose-stimulated insulin secretion. The polypeptide is Protein TUNAR (Mus musculus (Mouse)).